A 500-amino-acid polypeptide reads, in one-letter code: Probable cytosol aminopeptidase (500 aa).

Residues K265 and D270 each coordinate Mn(2+). The active site involves K277. D288, D347, and E349 together coordinate Mn(2+). R351 is an active-site residue.

This sequence belongs to the peptidase M17 family. Mn(2+) serves as cofactor.

The protein resides in the cytoplasm. It catalyses the reaction Release of an N-terminal amino acid, Xaa-|-Yaa-, in which Xaa is preferably Leu, but may be other amino acids including Pro although not Arg or Lys, and Yaa may be Pro. Amino acid amides and methyl esters are also readily hydrolyzed, but rates on arylamides are exceedingly low.. The enzyme catalyses Release of an N-terminal amino acid, preferentially leucine, but not glutamic or aspartic acids.. Functionally, presumably involved in the processing and regular turnover of intracellular proteins. Catalyzes the removal of unsubstituted N-terminal amino acids from various peptides. This Rickettsia felis (strain ATCC VR-1525 / URRWXCal2) (Rickettsia azadi) protein is Probable cytosol aminopeptidase.